The sequence spans 372 residues: Glycerophosphodiester phosphodiesterase GDPD6 (372 aa).

A signal peptide spans 1-21 (MAFKYLLPLLLLSLLVANCAS). The tract at residues 32 to 58 (KHATKKPLQTSRPYNLAHRGSNGELPE) is disordered. The region spanning 44–362 (PYNLAHRGSN…DFTGSLHNYQ (319 aa)) is the GP-PDE domain. N-linked (GlcNAc...) asparagine glycans are attached at residues Asn-120, Asn-239, and Asn-260.

It belongs to the glycerophosphoryl diester phosphodiesterase family. As to expression, expressed in flowers and siliques.

The catalysed reaction is a sn-glycero-3-phosphodiester + H2O = an alcohol + sn-glycerol 3-phosphate + H(+). This chain is Glycerophosphodiester phosphodiesterase GDPD6, found in Arabidopsis thaliana (Mouse-ear cress).